The sequence spans 440 residues: Rhamnogalacturonase A (440 aa).

Residues 1–18 (MRALFLLALGSIPALVSG) form the signal peptide. An intrachain disulfide couples Cys-39 to Cys-65. Residue Asn-50 is glycosylated (N-linked (GlcNAc...) asparagine). Catalysis depends on Asp-215, which acts as the Proton donor. Residues Cys-217 and Cys-234 are joined by a disulfide bond. His-290 is a catalytic residue. N-linked (GlcNAc...) asparagine glycosylation occurs at Asn-317. Intrachain disulfides connect Cys-340-Cys-346 and Cys-368-Cys-377. Thr-385 carries O-linked (Man) threonine glycosylation. The O-linked (Man) serine glycan is linked to Ser-386. Residues Thr-388, Thr-389, and Thr-390 are each glycosylated (O-linked (Man) threonine). The O-linked (Man) serine glycan is linked to Ser-391. O-linked (Man) threonine glycans are attached at residues Thr-392 and Thr-394. O-linked (Man) serine glycosylation is found at Ser-398 and Ser-401. 3 O-linked (Man) threonine glycosylation sites follow: Thr-403, Thr-404, and Thr-416. Ser-418 carries O-linked (Man) serine glycosylation. Residues Thr-423 and Thr-426 are each glycosylated (O-linked (Man) threonine). Residues Ser-427 and Ser-436 are each glycosylated (O-linked (Man) serine).

Belongs to the glycosyl hydrolase 28 family. Post-translationally, the N-terminus is blocked. N-glycosylated and may also be O-glycosylated.

It localises to the secreted. It catalyses the reaction Endohydrolysis of alpha-D-GalA-(1-&gt;2)-alpha-L-Rha glycosidic bond in the rhamnogalacturonan I backbone with initial inversion of anomeric configuration releasing oligosaccharides with beta-D-GalA at the reducing end.. Functionally, pectinolytic enzymes consist of four classes of enzymes: pectine lyase, polygalacturonase, pectin methylesterase and rhamnogalacturonase. Has a positive effect in the apple hot-mash liquefaction process. Hydrolyzes alpha-D-galacturonopyranosyl-(1,2)-alpha-L-rhamnopyranosyl linkages in the backbone of the hairy regions of pectins. This chain is Rhamnogalacturonase A (rhgA), found in Aspergillus aculeatus.